A 199-amino-acid chain; its full sequence is Pneumococcal vaccine antigen A homolog (199 aa).

It is found in the cell surface. The sequence is that of Pneumococcal vaccine antigen A homolog (pvaA) from Streptococcus pyogenes serotype M1.